Consider the following 244-residue polypeptide: Putative ribosomal recycling factor, mitochondrial (244 aa).

The protein belongs to the RRF family.

It is found in the mitochondrion. Necessary for protein synthesis in mitochondria. Functions as a ribosome recycling factor in mitochondria. The protein is Putative ribosomal recycling factor, mitochondrial (rrf1) of Schizosaccharomyces pombe (strain 972 / ATCC 24843) (Fission yeast).